The sequence spans 852 residues: Polyphosphate kinase (852 aa).

Disordered regions lie at residues 1 to 36 and 58 to 82; these read MATGVSSRDGSRERIRRRAVARDHPGCGPHRLDRPI and SHDPAPSQSVGKRPQKSTKTASRRK. Basic and acidic residues predominate over residues 20–36; sequence VARDHPGCGPHRLDRPI. A compositionally biased stretch (polar residues) spans 58–67; the sequence is SHDPAPSQSV. Asn131 contacts ATP. Positions 251–303 are disordered; the sequence is GDEIGPQRTPPPSDSLDNRVPSNLKRNSDTANQQPTPAENISAPEDGAEQTEP. Residues 258–303 form an insert region; it reads RTPPPSDSLDNRVPSNLKRNSDTANQQPTPAENISAPEDGAEQTEP. The span at 270–289 shows a compositional bias: polar residues; it reads VPSNLKRNSDTANQQPTPAE. Mg(2+)-binding residues include Arg524 and Arg554. The active-site Phosphohistidine intermediate is the His584. The ATP site is built by Tyr617, Arg713, and His741.

The protein belongs to the polyphosphate kinase 1 (PPK1) family. Mg(2+) serves as cofactor. Post-translationally, an intermediate of this reaction is the autophosphorylated ppk in which a phosphate is covalently linked to a histidine residue through a N-P bond.

It carries out the reaction [phosphate](n) + ATP = [phosphate](n+1) + ADP. Catalyzes the reversible transfer of the terminal phosphate of ATP to form a long-chain polyphosphate (polyP). This Rhodopirellula baltica (strain DSM 10527 / NCIMB 13988 / SH1) protein is Polyphosphate kinase.